We begin with the raw amino-acid sequence, 285 residues long: Bifunctional protein FolD (285 aa).

NADP(+)-binding positions include 166-168, Ser-191, and Ile-232; that span reads GAS.

Belongs to the tetrahydrofolate dehydrogenase/cyclohydrolase family. In terms of assembly, homodimer.

The enzyme catalyses (6R)-5,10-methylene-5,6,7,8-tetrahydrofolate + NADP(+) = (6R)-5,10-methenyltetrahydrofolate + NADPH. It catalyses the reaction (6R)-5,10-methenyltetrahydrofolate + H2O = (6R)-10-formyltetrahydrofolate + H(+). It participates in one-carbon metabolism; tetrahydrofolate interconversion. Functionally, catalyzes the oxidation of 5,10-methylenetetrahydrofolate to 5,10-methenyltetrahydrofolate and then the hydrolysis of 5,10-methenyltetrahydrofolate to 10-formyltetrahydrofolate. The protein is Bifunctional protein FolD of Actinobacillus pleuropneumoniae serotype 7 (strain AP76).